The primary structure comprises 707 residues: Leucine-rich repeat neuronal protein 3 (707 aa).

Residues 1 to 22 form the signal peptide; sequence MKDAPLQIHVLLGLAITALVQA. The 47-residue stretch at 23–69 folds into the LRRNT domain; sequence GDKKVDCPQLCTCEIRPWFTPRSIYMEASTVDCNDLGLLNFPARLPA. The Extracellular segment spans residues 23–626; sequence GDKKVDCPQL…DGKENGKSHT (604 aa). LRR repeat units lie at residues 70 to 91, 93 to 114, 117 to 138, 141 to 162, 165 to 186, 189 to 210, 213 to 234, 237 to 258, 261 to 282, 285 to 304, 310 to 332, and 335 to 358; these read DTQILLLQTNNIARIEHSTDFP, NLTGLDLSQNNLSSVTNINVQK, QLLSVYLEENKLTELPEKCLYG, NLQELYVNHNLLSAISPGAFVG, NLLRLHLNSNRLQMINSKWFEA, NLEILMLGDNPILRIKDMNFQP, KLRSLVIAGINLTEVPDDALVG, NLESISFYDNRLNKVPQVALQK, NLKFLDLNKNPINRIRRGDFSN, HLKELGINNMPELVSIDSLA, DLRKIEATNNPRLSYIHPNAFFR, and KLESLMLNSNALSALYHGTIESLP. Residues Asn93 and Asn103 are each glycosylated (N-linked (GlcNAc...) asparagine). Asn223 carries an N-linked (GlcNAc...) asparagine glycan. The LRRCT domain maps to 368-421; it reads NPIRCDCVIRWINMNKTNIRFMEPDSLFCVDPPEFQGQNVRQVHFRDMMEICLP. The N-linked (GlcNAc...) asparagine glycan is linked to Asn382. In terms of domain architecture, Ig-like C2-type spans 421-514; the sequence is PLIAPESFPS…DLKSIMIKVG (94 aa). A disulfide bridge links Cys444 with Cys496. 3 N-linked (GlcNAc...) asparagine glycosylation sites follow: Asn522, Asn579, and Asn608. The 92-residue stretch at 523-614 folds into the Fibronectin type-III domain; sequence GSLNIKIRDI…QCVNVTTKSL (92 aa). Residues 627–647 form a helical membrane-spanning segment; the sequence is VFVACVGGLLGIIGVMCLFGC. Over 648–707 the chain is Cytoplasmic; the sequence is VSQEGNCENEHSYTVNHCHKPTLAFSELYPPLINLWESSKEKPASLEVKATAIGVPTSMS.

Its subcellular location is the membrane. The chain is Leucine-rich repeat neuronal protein 3 (Lrrn3) from Rattus norvegicus (Rat).